Reading from the N-terminus, the 680-residue chain is ATPase family AAA domain-containing protein FIGL1 (680 aa).

Disordered regions lie at residues 214 to 234 (YGNS…NQDR), 250 to 275 (FGTK…GAPN), and 288 to 352 (VRQK…GGKT). The segment covering 295–308 (TESPSSCLSPQSDK) has biased composition (polar residues). Residues 313–323 (RGYGSRSGGLR) are compositionally biased toward gly residues. Positions 336–346 (TNGNNVGNLTS) are enriched in polar residues. ATP is bound by residues Ala406 and 446 to 451 (GTGKTM).

Belongs to the AAA ATPase family. The cofactor is Mg(2+).

Its subcellular location is the nucleus. The enzyme catalyses ATP + H2O = ADP + phosphate + H(+). Involved in DNA double-strand break (DBS) repair via homologous recombination (HR). Limits class II meiotic crossover (CO) formation by regulating the invasion step of meiotic HR. May counteract DMC1 and RAD51-mediated inter-homolog strand invasion to limit CO formation. Functions independently of FANCM. In Arabidopsis thaliana (Mouse-ear cress), this protein is ATPase family AAA domain-containing protein FIGL1.